We begin with the raw amino-acid sequence, 177 residues long: NAD(P)H-quinone oxidoreductase subunit 6, chloroplastic (177 aa).

5 helical membrane passes run 10–30, 32–52, 61–81, 92–112, and 152–172; these read ILLV…VLLT, PIYS…FYIP, AQLL…VMFM, FWTV…FSLI, and FYLP…GAIA.

The protein belongs to the complex I subunit 6 family. NDH is composed of at least 16 different subunits, 5 of which are encoded in the nucleus.

It is found in the plastid. It localises to the chloroplast thylakoid membrane. The catalysed reaction is a plastoquinone + NADH + (n+1) H(+)(in) = a plastoquinol + NAD(+) + n H(+)(out). It catalyses the reaction a plastoquinone + NADPH + (n+1) H(+)(in) = a plastoquinol + NADP(+) + n H(+)(out). Functionally, NDH shuttles electrons from NAD(P)H:plastoquinone, via FMN and iron-sulfur (Fe-S) centers, to quinones in the photosynthetic chain and possibly in a chloroplast respiratory chain. The immediate electron acceptor for the enzyme in this species is believed to be plastoquinone. Couples the redox reaction to proton translocation, and thus conserves the redox energy in a proton gradient. The sequence is that of NAD(P)H-quinone oxidoreductase subunit 6, chloroplastic (ndhG) from Nymphaea alba (White water-lily).